A 176-amino-acid chain; its full sequence is MIKPVLKMGDPCLLQPARRVDQFGTPELEALLQDMQDTMAALNGAGLAAPQIGVSLQVVIFGVEHSPRYPDAESVPFTVLINPVLTPLTEQMEEDWEGCLSIPGMRGLVPRYTRLRYQGVDAAGASIDRTVTGFHARVVQHECDHLNGILYPMRINDLRKFGYTDTLFPGQTIADD.

Fe cation is bound by residues C99 and H141. E142 is a catalytic residue. H145 lines the Fe cation pocket.

The protein belongs to the polypeptide deformylase family. The cofactor is Fe(2+).

It carries out the reaction N-terminal N-formyl-L-methionyl-[peptide] + H2O = N-terminal L-methionyl-[peptide] + formate. Functionally, removes the formyl group from the N-terminal Met of newly synthesized proteins. Requires at least a dipeptide for an efficient rate of reaction. N-terminal L-methionine is a prerequisite for activity but the enzyme has broad specificity at other positions. The polypeptide is Peptide deformylase 1 (Nitrosomonas europaea (strain ATCC 19718 / CIP 103999 / KCTC 2705 / NBRC 14298)).